Consider the following 204-residue polypeptide: bMERB domain-containing protein 1 (204 aa).

Positions 3–150 (LKQSLSTHLE…EQEEDKEMAD (148 aa)) constitute a bMERB domain. Residues 162–187 (VTKSPASSRAEKKAEPPPSKPTVAKT) form a disordered region.

This is bMERB domain-containing protein 1 (BMERB1) from Pongo abelii (Sumatran orangutan).